The following is a 95-amino-acid chain: Aspartyl/glutamyl-tRNA(Asn/Gln) amidotransferase subunit C (95 aa).

It belongs to the GatC family. In terms of assembly, heterotrimer of A, B and C subunits.

The enzyme catalyses L-glutamyl-tRNA(Gln) + L-glutamine + ATP + H2O = L-glutaminyl-tRNA(Gln) + L-glutamate + ADP + phosphate + H(+). It catalyses the reaction L-aspartyl-tRNA(Asn) + L-glutamine + ATP + H2O = L-asparaginyl-tRNA(Asn) + L-glutamate + ADP + phosphate + 2 H(+). Its function is as follows. Allows the formation of correctly charged Asn-tRNA(Asn) or Gln-tRNA(Gln) through the transamidation of misacylated Asp-tRNA(Asn) or Glu-tRNA(Gln) in organisms which lack either or both of asparaginyl-tRNA or glutaminyl-tRNA synthetases. The reaction takes place in the presence of glutamine and ATP through an activated phospho-Asp-tRNA(Asn) or phospho-Glu-tRNA(Gln). The polypeptide is Aspartyl/glutamyl-tRNA(Asn/Gln) amidotransferase subunit C (Geobacter metallireducens (strain ATCC 53774 / DSM 7210 / GS-15)).